Here is a 277-residue protein sequence, read N- to C-terminus: Ribosomal RNA small subunit methyltransferase I (277 aa).

It belongs to the methyltransferase superfamily. RsmI family.

The protein localises to the cytoplasm. The enzyme catalyses cytidine(1402) in 16S rRNA + S-adenosyl-L-methionine = 2'-O-methylcytidine(1402) in 16S rRNA + S-adenosyl-L-homocysteine + H(+). Functionally, catalyzes the 2'-O-methylation of the ribose of cytidine 1402 (C1402) in 16S rRNA. In Mycoplasma genitalium (strain ATCC 33530 / DSM 19775 / NCTC 10195 / G37) (Mycoplasmoides genitalium), this protein is Ribosomal RNA small subunit methyltransferase I.